Reading from the N-terminus, the 118-residue chain is Large ribosomal subunit protein bL20 (118 aa).

The protein belongs to the bacterial ribosomal protein bL20 family.

Binds directly to 23S ribosomal RNA and is necessary for the in vitro assembly process of the 50S ribosomal subunit. It is not involved in the protein synthesizing functions of that subunit. This chain is Large ribosomal subunit protein bL20, found in Protochlamydia amoebophila (strain UWE25).